The following is a 46-amino-acid chain: Large ribosomal subunit protein bL33A (46 aa).

This sequence belongs to the bacterial ribosomal protein bL33 family.

This Mesomycoplasma hyopneumoniae (strain 7448) (Mycoplasma hyopneumoniae) protein is Large ribosomal subunit protein bL33A.